We begin with the raw amino-acid sequence, 417 residues long: Phosphoglycerate kinase (417 aa).

Substrate-binding positions include 24 to 26 (DLN), R44, 67 to 70 (HLGR), R126, and R170. Residues K220, G316, E347, and 373 to 376 (GGDS) each bind ATP.

The protein belongs to the phosphoglycerate kinase family. In terms of assembly, monomer.

It is found in the cytoplasm. It catalyses the reaction (2R)-3-phosphoglycerate + ATP = (2R)-3-phospho-glyceroyl phosphate + ADP. The protein operates within carbohydrate degradation; glycolysis; pyruvate from D-glyceraldehyde 3-phosphate: step 2/5. The chain is Phosphoglycerate kinase from Renibacterium salmoninarum (strain ATCC 33209 / DSM 20767 / JCM 11484 / NBRC 15589 / NCIMB 2235).